We begin with the raw amino-acid sequence, 172 residues long: uncharacterized protein (172 aa).

Transmembrane regions (helical) follow at residues 1–21 (MLFINITFACILAIRFYSLSI), 41–61 (NSTLLSIAHVAFYFAAIIEAN), 72–92 (QIGLAILIFAIAMLFYVIYEL), and 136–156 (FCQAKYTALVGLPIYLLILAV).

The protein localises to the cell membrane. This is an uncharacterized protein from Haemophilus influenzae (strain ATCC 51907 / DSM 11121 / KW20 / Rd).